A 111-amino-acid chain; its full sequence is Protein BEX5 (111 aa).

The span at 1–12 (MENVPKENKVVE) shows a compositional bias: basic and acidic residues. The disordered stretch occupies residues 1 to 37 (MENVPKENKVVEKAPVQNEAPALGGGEYQEPGGNVKG). The his cluster stretch occupies residues 100 to 104 (HHDHH). Cysteine 108 serves as a coordination point for Zn(2+).

It belongs to the BEX family. Post-translationally, ubiquitinated. Degraded by the proteasome.

The protein localises to the cytoplasm. This is Protein BEX5 (BEX5) from Homo sapiens (Human).